The following is a 237-amino-acid chain: Phosphoribosylaminoimidazole-succinocarboxamide synthase (237 aa).

It belongs to the SAICAR synthetase family.

The enzyme catalyses 5-amino-1-(5-phospho-D-ribosyl)imidazole-4-carboxylate + L-aspartate + ATP = (2S)-2-[5-amino-1-(5-phospho-beta-D-ribosyl)imidazole-4-carboxamido]succinate + ADP + phosphate + 2 H(+). The protein operates within purine metabolism; IMP biosynthesis via de novo pathway; 5-amino-1-(5-phospho-D-ribosyl)imidazole-4-carboxamide from 5-amino-1-(5-phospho-D-ribosyl)imidazole-4-carboxylate: step 1/2. In Listeria monocytogenes serovar 1/2a (strain ATCC BAA-679 / EGD-e), this protein is Phosphoribosylaminoimidazole-succinocarboxamide synthase.